Consider the following 562-residue polypeptide: Dihydroxy-acid dehydratase 1 (562 aa).

Mg(2+) is bound at residue Asp-80. Residue Cys-121 participates in [2Fe-2S] cluster binding. Residues Asp-122 and Lys-123 each coordinate Mg(2+). At Lys-123 the chain carries N6-carboxylysine. Cys-194 is a [2Fe-2S] cluster binding site. Mg(2+) is bound at residue Glu-446. Ser-472 functions as the Proton acceptor in the catalytic mechanism.

It belongs to the IlvD/Edd family. As to quaternary structure, homodimer. It depends on [2Fe-2S] cluster as a cofactor. The cofactor is Mg(2+).

The enzyme catalyses (2R)-2,3-dihydroxy-3-methylbutanoate = 3-methyl-2-oxobutanoate + H2O. It carries out the reaction (2R,3R)-2,3-dihydroxy-3-methylpentanoate = (S)-3-methyl-2-oxopentanoate + H2O. Its pathway is amino-acid biosynthesis; L-isoleucine biosynthesis; L-isoleucine from 2-oxobutanoate: step 3/4. It participates in amino-acid biosynthesis; L-valine biosynthesis; L-valine from pyruvate: step 3/4. Its function is as follows. Functions in the biosynthesis of branched-chain amino acids. Catalyzes the dehydration of (2R,3R)-2,3-dihydroxy-3-methylpentanoate (2,3-dihydroxy-3-methylvalerate) into 2-oxo-3-methylpentanoate (2-oxo-3-methylvalerate) and of (2R)-2,3-dihydroxy-3-methylbutanoate (2,3-dihydroxyisovalerate) into 2-oxo-3-methylbutanoate (2-oxoisovalerate), the penultimate precursor to L-isoleucine and L-valine, respectively. The protein is Dihydroxy-acid dehydratase 1 of Staphylococcus saprophyticus subsp. saprophyticus (strain ATCC 15305 / DSM 20229 / NCIMB 8711 / NCTC 7292 / S-41).